Here is an 85-residue protein sequence, read N- to C-terminus: UPF0473 protein CLK_1946 (85 aa).

Belongs to the UPF0473 family.

The polypeptide is UPF0473 protein CLK_1946 (Clostridium botulinum (strain Loch Maree / Type A3)).